Here is a 77-residue protein sequence, read N- to C-terminus: Large ribosomal subunit protein bL28 (77 aa).

Belongs to the bacterial ribosomal protein bL28 family.

The chain is Large ribosomal subunit protein bL28 from Polynucleobacter asymbioticus (strain DSM 18221 / CIP 109841 / QLW-P1DMWA-1) (Polynucleobacter necessarius subsp. asymbioticus).